Consider the following 368-residue polypeptide: tRNA/tmRNA (uracil-C(5))-methyltransferase (368 aa).

Positions 192, 220, 225, 241, and 301 each coordinate S-adenosyl-L-methionine. Cysteine 326 acts as the Nucleophile in catalysis. Catalysis depends on glutamate 360, which acts as the Proton acceptor.

This sequence belongs to the class I-like SAM-binding methyltransferase superfamily. RNA M5U methyltransferase family. TrmA subfamily.

The enzyme catalyses uridine(54) in tRNA + S-adenosyl-L-methionine = 5-methyluridine(54) in tRNA + S-adenosyl-L-homocysteine + H(+). It carries out the reaction uridine(341) in tmRNA + S-adenosyl-L-methionine = 5-methyluridine(341) in tmRNA + S-adenosyl-L-homocysteine + H(+). In terms of biological role, dual-specificity methyltransferase that catalyzes the formation of 5-methyluridine at position 54 (m5U54) in all tRNAs, and that of position 341 (m5U341) in tmRNA (transfer-mRNA). This chain is tRNA/tmRNA (uracil-C(5))-methyltransferase, found in Actinobacillus pleuropneumoniae serotype 5b (strain L20).